The primary structure comprises 596 residues: Elongation factor 4 (596 aa).

One can recognise a tr-type G domain in the interval 2 to 184 (DHIRNFSIIA…AVVARIPPPK (183 aa)). GTP is bound by residues 14 to 19 (DHGKST) and 131 to 134 (NKID).

This sequence belongs to the TRAFAC class translation factor GTPase superfamily. Classic translation factor GTPase family. LepA subfamily.

The protein localises to the cell inner membrane. The catalysed reaction is GTP + H2O = GDP + phosphate + H(+). Its function is as follows. Required for accurate and efficient protein synthesis under certain stress conditions. May act as a fidelity factor of the translation reaction, by catalyzing a one-codon backward translocation of tRNAs on improperly translocated ribosomes. Back-translocation proceeds from a post-translocation (POST) complex to a pre-translocation (PRE) complex, thus giving elongation factor G a second chance to translocate the tRNAs correctly. Binds to ribosomes in a GTP-dependent manner. The protein is Elongation factor 4 of Dechloromonas aromatica (strain RCB).